The following is a 660-amino-acid chain: Bifunctional polymyxin resistance protein ArnA (660 aa).

A formyltransferase ArnAFT region spans residues 1–304 (MKAVIFAYHD…TLGLVAGARL (304 aa)). H104 functions as the Proton donor; for formyltransferase activity in the catalytic mechanism. (6R)-10-formyltetrahydrofolate is bound by residues R114 and 136 to 140 (VKRAD). A dehydrogenase ArnADH region spans residues 314–660 (RRIRVLILGV…RSVDVAERAS (347 aa)). NAD(+)-binding positions include D347 and 368 to 369 (DI). UDP-alpha-D-glucuronate contacts are provided by residues A393, Y398, and 432-433 (TS). Catalysis depends on E434, which acts as the Proton acceptor; for decarboxylase activity. UDP-alpha-D-glucuronate contacts are provided by residues R460, N492, 526-535 (KLIDGGQQKR), and Y613. The Proton donor; for decarboxylase activity role is filled by R619.

It in the N-terminal section; belongs to the Fmt family. UDP-L-Ara4N formyltransferase subfamily. The protein in the C-terminal section; belongs to the NAD(P)-dependent epimerase/dehydratase family. UDP-glucuronic acid decarboxylase subfamily. In terms of assembly, homohexamer, formed by a dimer of trimers.

It catalyses the reaction UDP-alpha-D-glucuronate + NAD(+) = UDP-beta-L-threo-pentopyranos-4-ulose + CO2 + NADH. It carries out the reaction UDP-4-amino-4-deoxy-beta-L-arabinose + (6R)-10-formyltetrahydrofolate = UDP-4-deoxy-4-formamido-beta-L-arabinose + (6S)-5,6,7,8-tetrahydrofolate + H(+). It participates in nucleotide-sugar biosynthesis; UDP-4-deoxy-4-formamido-beta-L-arabinose biosynthesis; UDP-4-deoxy-4-formamido-beta-L-arabinose from UDP-alpha-D-glucuronate: step 1/3. The protein operates within nucleotide-sugar biosynthesis; UDP-4-deoxy-4-formamido-beta-L-arabinose biosynthesis; UDP-4-deoxy-4-formamido-beta-L-arabinose from UDP-alpha-D-glucuronate: step 3/3. Its pathway is bacterial outer membrane biogenesis; lipopolysaccharide biosynthesis. Functionally, bifunctional enzyme that catalyzes the oxidative decarboxylation of UDP-glucuronic acid (UDP-GlcUA) to UDP-4-keto-arabinose (UDP-Ara4O) and the addition of a formyl group to UDP-4-amino-4-deoxy-L-arabinose (UDP-L-Ara4N) to form UDP-L-4-formamido-arabinose (UDP-L-Ara4FN). The modified arabinose is attached to lipid A and is required for resistance to polymyxin and cationic antimicrobial peptides. The sequence is that of Bifunctional polymyxin resistance protein ArnA from Salmonella newport (strain SL254).